The chain runs to 331 residues: Ribonuclease Z (331 aa).

Positions 56, 58, 60, 61, 162, 235, and 297 each coordinate Zn(2+). The Proton acceptor role is filled by D60.

It belongs to the RNase Z family. As to quaternary structure, homodimer. Zn(2+) serves as cofactor.

The catalysed reaction is Endonucleolytic cleavage of RNA, removing extra 3' nucleotides from tRNA precursor, generating 3' termini of tRNAs. A 3'-hydroxy group is left at the tRNA terminus and a 5'-phosphoryl group is left at the trailer molecule.. Its function is as follows. Zinc phosphodiesterase, which displays some tRNA 3'-processing endonuclease activity. Probably involved in tRNA maturation, by removing a 3'-trailer from precursor tRNA. This chain is Ribonuclease Z (rnz), found in Deinococcus radiodurans (strain ATCC 13939 / DSM 20539 / JCM 16871 / CCUG 27074 / LMG 4051 / NBRC 15346 / NCIMB 9279 / VKM B-1422 / R1).